Consider the following 491-residue polypeptide: Aspartyl/glutamyl-tRNA(Asn/Gln) amidotransferase subunit B (491 aa).

The protein belongs to the GatB/GatE family. GatB subfamily. Heterotrimer of A, B and C subunits.

The enzyme catalyses L-glutamyl-tRNA(Gln) + L-glutamine + ATP + H2O = L-glutaminyl-tRNA(Gln) + L-glutamate + ADP + phosphate + H(+). It carries out the reaction L-aspartyl-tRNA(Asn) + L-glutamine + ATP + H2O = L-asparaginyl-tRNA(Asn) + L-glutamate + ADP + phosphate + 2 H(+). In terms of biological role, allows the formation of correctly charged Asn-tRNA(Asn) or Gln-tRNA(Gln) through the transamidation of misacylated Asp-tRNA(Asn) or Glu-tRNA(Gln) in organisms which lack either or both of asparaginyl-tRNA or glutaminyl-tRNA synthetases. The reaction takes place in the presence of glutamine and ATP through an activated phospho-Asp-tRNA(Asn) or phospho-Glu-tRNA(Gln). This chain is Aspartyl/glutamyl-tRNA(Asn/Gln) amidotransferase subunit B, found in Prochlorococcus marinus (strain NATL1A).